An 83-amino-acid polypeptide reads, in one-letter code: Small ribosomal subunit protein bS16 (83 aa).

This sequence belongs to the bacterial ribosomal protein bS16 family.

The protein is Small ribosomal subunit protein bS16 of Pseudomonas aeruginosa (strain LESB58).